Reading from the N-terminus, the 243-residue chain is ATP synthase subunit a (243 aa).

The next 7 membrane-spanning stretches (helical) occupy residues 29–49, 54–74, 89–109, 114–134, 144–164, 182–202, and 208–228; these read NASL…YIGL, IIPN…VSTI, VFTI…PLGF, HIAV…IIGF, ILLP…IELF, IAGH…NIFL, and IFII…AYIF.

The protein belongs to the ATPase A chain family. As to quaternary structure, F-type ATPases have 2 components, CF(1) - the catalytic core - and CF(0) - the membrane proton channel. CF(1) has five subunits: alpha(3), beta(3), gamma(1), delta(1), epsilon(1). CF(0) has three main subunits: a(1), b(2) and c(9-12). The alpha and beta chains form an alternating ring which encloses part of the gamma chain. CF(1) is attached to CF(0) by a central stalk formed by the gamma and epsilon chains, while a peripheral stalk is formed by the delta and b chains.

The protein localises to the cell inner membrane. Its function is as follows. Key component of the proton channel; it plays a direct role in the translocation of protons across the membrane. The polypeptide is ATP synthase subunit a (Ehrlichia canis (strain Jake)).